The sequence spans 127 residues: Fluoride-specific ion channel FluC (127 aa).

4 helical membrane-spanning segments follow: residues 4 to 24 (IIYI…TQIA), 34 to 54 (FPFP…IGFF), 65 to 85 (FELR…FSTL), and 97 to 117 (FYGI…LAVL). Positions 77 and 80 each coordinate Na(+).

Belongs to the fluoride channel Fluc/FEX (TC 1.A.43) family.

The protein resides in the cell inner membrane. The enzyme catalyses fluoride(in) = fluoride(out). With respect to regulation, na(+) is not transported, but it plays an essential structural role and its presence is essential for fluoride channel function. Fluoride-specific ion channel. Important for reducing fluoride concentration in the cell, thus reducing its toxicity. This chain is Fluoride-specific ion channel FluC, found in Bacteroides fragilis (strain ATCC 25285 / DSM 2151 / CCUG 4856 / JCM 11019 / LMG 10263 / NCTC 9343 / Onslow / VPI 2553 / EN-2).